Here is a 158-residue protein sequence, read N- to C-terminus: MSIEGVFREGFVTTSLDAVINWTRTGSLWPMTFGLACCAVEMIHAGCSRYDLDRFGVVFRPSPRQSDLMIVAGTLCNKMAPALRKVYDQMAEPRWVISMGSCANGGGYYHYSYSVVRGCDRIVPVDVYVPGCPPTAEALLYGIIQLQNKIKRTNTIAR.

[4Fe-4S] cluster is bound by residues C37, C38, C102, and C132.

The protein belongs to the complex I 20 kDa subunit family. NDH-1 is composed of 14 different subunits. Subunits NuoB, C, D, E, F, and G constitute the peripheral sector of the complex. The cofactor is [4Fe-4S] cluster.

Its subcellular location is the cell inner membrane. The enzyme catalyses a quinone + NADH + 5 H(+)(in) = a quinol + NAD(+) + 4 H(+)(out). Functionally, NDH-1 shuttles electrons from NADH, via FMN and iron-sulfur (Fe-S) centers, to quinones in the respiratory chain. Couples the redox reaction to proton translocation (for every two electrons transferred, four hydrogen ions are translocated across the cytoplasmic membrane), and thus conserves the redox energy in a proton gradient. This is NADH-quinone oxidoreductase subunit B 1 from Azoarcus sp. (strain BH72).